Here is a 1435-residue protein sequence, read N- to C-terminus: Dicer-like protein 2 (1435 aa).

A Helicase ATP-binding domain is found at 54–234 (MLSESLRQNI…LEVLEINLNA (181 aa)). 67–74 (MDTGSGKT) contributes to the ATP binding site. The DEAH box signature appears at 175–178 (DEAH). In terms of domain architecture, Helicase C-terminal spans 400 to 564 (KLIDFLVLEH…ENKRALEHIQ (165 aa)). The 94-residue stretch at 591–684 (ARNHLSHFCG…MPAHHHIDDE (94 aa)) folds into the Dicer dsRNA-binding fold domain. 2 RNase III domains span residues 956–1099 (ANEL…IDGG) and 1141–1323 (LSEI…IDSQ). Residues E1178, D1309, and E1312 each coordinate Mg(2+).

This sequence belongs to the helicase family. Dicer subfamily. It depends on Mg(2+) as a cofactor. Mn(2+) is required as a cofactor.

Functionally, dicer-like endonuclease involved in cleaving double-stranded RNA in the RNA interference (RNAi) pathway. Produces 21 to 25 bp dsRNAs (siRNAs) which target the selective destruction of homologous RNAs leading to sequence-specific suppression of gene expression, called post-transcriptional gene silencing (PTGS). Part of a broad host defense response against viral infection and transposons. The polypeptide is Dicer-like protein 2 (DCL2) (Coccidioides immitis (strain RS) (Valley fever fungus)).